A 354-amino-acid polypeptide reads, in one-letter code: RH-like protein (354 aa).

Transmembrane regions (helical) follow at residues 11–31 (GCLPLWALTLEAALILLFFFF), 45–65 (VATYQVGQDLTVMAALGLGFL), 77–97 (VAFNLFMLALGVQWAILLDGF), 125–145 (ISVGAVLGKVNLVQLVVMVLV), 167–187 (VNIMHIHVFAAYFGLTVAWCL), 209–229 (AMLGALFLWIFWPSFNSALLT), 238–258 (VFNTYYALAVSTVTAISVSSL), and 287–307 (LISSPWLAMVLGLVAGLISIG).

Belongs to the ammonium transporter (TC 2.A.49) family. Rh subfamily.

It localises to the membrane. Its function is as follows. May be part of an oligomeric complex which is likely to have a transport or channel function in the erythrocyte membrane. The chain is RH-like protein from Hylobates pileatus (Pileated gibbon).